The following is a 502-amino-acid chain: NAD(P)H-quinone oxidoreductase chain 4, chloroplastic (502 aa).

14 helical membrane passes run 4 to 24 (FPWL…IFFF), 37 to 57 (ICIC…HFQL), 87 to 107 (VGPI…AWPV), 113 to 130 (LFHF…GLFS), 134 to 154 (LLLF…LLSM), 167 to 187 (FILY…GMGL), 208 to 228 (ALEI…LPII), 242 to 262 (HYST…YGLV), 272 to 292 (AHSI…IYAA), 305 to 325 (IAYS…SITD), 330 to 350 (GAIL…FLAG), 374 to 396 (IFTM…GFAA), 416 to 436 (ILIT…SLSM), and 464 to 484 (LFVS…PDFV).

It belongs to the complex I subunit 4 family.

The protein localises to the plastid. It localises to the chloroplast thylakoid membrane. The enzyme catalyses a plastoquinone + NADH + (n+1) H(+)(in) = a plastoquinol + NAD(+) + n H(+)(out). It catalyses the reaction a plastoquinone + NADPH + (n+1) H(+)(in) = a plastoquinol + NADP(+) + n H(+)(out). This is NAD(P)H-quinone oxidoreductase chain 4, chloroplastic from Ranunculus macranthus (Large buttercup).